A 416-amino-acid chain; its full sequence is MKVIVLGAGIIGVTSAYQLSRAGHEVTVIDRQPGPALETSFANAGEVSFGYCSPWAAPGIPMKALKWLFMQHAPLILRPRIDAAMLSWMAKMLSNCTSRRYAVNKSRMLRLADYSRTSLAALREETAITYDERMQGTLQLFRTEAQLDASAKDISALAADGIPYEVLDRDGCIRAEPALGRVRDKIVGGLLTPQDETGDCFKFANALAGRAEKLGVCFDYGTEIRALEVDGGRVHGVVTSKGRRAADAVVVALGSYSPLLVRRFGIRLPVYPVKGYSLTIPIADASRAPVSTVMDETYKIAITRLGDRIRVGGMAEISGYTNDLGIARRRTLEHSVMDLFPGGDAAKGSFWSGLRPMTPDGTPVIGPTRIAGLFLNTGHGTLGWTMSSGSARVIADLVSDRKLEIDATDLAIARYG.

Residue 3-17 (VIVLGAGIIGVTSAY) coordinates FAD.

The protein belongs to the DadA oxidoreductase family. FAD is required as a cofactor.

The catalysed reaction is a D-alpha-amino acid + A + H2O = a 2-oxocarboxylate + AH2 + NH4(+). Its pathway is amino-acid degradation; D-alanine degradation; NH(3) and pyruvate from D-alanine: step 1/1. In terms of biological role, oxidative deamination of D-amino acids. The chain is D-amino acid dehydrogenase from Sinorhizobium medicae (strain WSM419) (Ensifer medicae).